The primary structure comprises 718 residues: Methionine--tRNA ligase (718 aa).

Residues Pro-27–His-37 carry the 'HIGH' region motif. Cys-158, Cys-161, Cys-171, and Cys-174 together coordinate Zn(2+). A 'KMSKS' region motif is present at residues Lys-348–Ser-352. Lys-351 lines the ATP pocket. Positions Asp-612 to Lys-718 constitute a tRNA-binding domain.

It belongs to the class-I aminoacyl-tRNA synthetase family. MetG type 1 subfamily. As to quaternary structure, homodimer. Requires Zn(2+) as cofactor.

It localises to the cytoplasm. It carries out the reaction tRNA(Met) + L-methionine + ATP = L-methionyl-tRNA(Met) + AMP + diphosphate. In terms of biological role, is required not only for elongation of protein synthesis but also for the initiation of all mRNA translation through initiator tRNA(fMet) aminoacylation. This Burkholderia orbicola (strain AU 1054) protein is Methionine--tRNA ligase.